A 248-amino-acid polypeptide reads, in one-letter code: MIRNQGWSLLYRIYPVRRFTRYSRVDMTFEGNTQDISTSVEERMTTVFGGRLKGEPPRSTSRVLSGGTKKIAGVQVPAKPQEPDNCCMSGCVNCVWEIYSEDLRDWKHRRKEAAEKIAGTKEKWPKDWNPPLGLLHMENVPVELREKKLETDSKKAEQPHDLSAIRSLFPKRKGPLPKSVLAAKRKNIALRHNYEQKDGGDQSVSESDADEGWEDIPVYVKAFAEFESKKRLQKIRRQEEIKKRTALV.

The transit peptide at 1–26 directs the protein to the mitochondrion; the sequence is MIRNQGWSLLYRIYPVRRFTRYSRVD. One can recognise an Oxidoreductase-like domain in the interval 69–116; that stretch reads KKIAGVQVPAKPQEPDNCCMSGCVNCVWEIYSEDLRDWKHRRKEAAEK.

This sequence belongs to the UPF0651 family.

Its subcellular location is the mitochondrion. In Saccharomyces cerevisiae (strain ATCC 204508 / S288c) (Baker's yeast), this protein is UPF0651 protein YPL107W, mitochondrial.